The chain runs to 386 residues: F420 non-reducing hydrogenase II small subunit (386 aa).

Residues 1–51 constitute a signal peptide (tat-type signal); sequence MVEMSTGMKNLTRTLESMDFLKMDRRTFMKAVSALGATAFLGTYQTEIVNA. The [4Fe-4S] cluster site is built by C67, C70, C178, C227, H273, C276, C296, and C302. 3 residues coordinate [3Fe-4S] cluster: C311, C330, and C333.

Belongs to the [NiFe]/[NiFeSe] hydrogenase small subunit family. In terms of assembly, composed of a large subunit (VhtA), a small subunit (VhtG) and a cytochrome subunit (VhtC). The cofactor is [4Fe-4S] cluster. It depends on [3Fe-4S] cluster as a cofactor. Post-translationally, predicted to be exported by the Tat system. The position of the signal peptide cleavage has not been experimentally proven.

It is found in the cell membrane. It carries out the reaction methanophenazine + H2 = dihydromethanophenazine. Part of the F420 non-reducing hydrogenase II complex that catalyzes the reduction of methanophenazine to dihydromethanophenazine. This chain is F420 non-reducing hydrogenase II small subunit, found in Methanosarcina mazei (strain ATCC BAA-159 / DSM 3647 / Goe1 / Go1 / JCM 11833 / OCM 88) (Methanosarcina frisia).